The chain runs to 121 residues: Large ribosomal subunit protein eL18 (121 aa).

It belongs to the eukaryotic ribosomal protein eL18 family.

The sequence is that of Large ribosomal subunit protein eL18 from Methanospirillum hungatei JF-1 (strain ATCC 27890 / DSM 864 / NBRC 100397 / JF-1).